The sequence spans 217 residues: Homeobox protein Hox-B7 (217 aa).

The Antp-type hexapeptide signature appears at 126–131 (IYPWMR). Residues 137–196 (RKRGRQTYTRYQTLELEKEFHYNRYLTRRRRIEIAHTLCLTERQIKIWFQNRRMKWKKEN) constitute a DNA-binding region (homeobox). Positions 192 to 217 (WKKENKTSGPGTTGQDKAEAEEEEEE) are disordered.

It belongs to the Antp homeobox family. Forms a DNA-binding heterodimer with transcription factor PBX1.

It localises to the nucleus. Functionally, sequence-specific transcription factor which is part of a developmental regulatory system that provides cells with specific positional identities on the anterior-posterior axis. This is Homeobox protein Hox-B7 (Hoxb7) from Mus musculus (Mouse).